A 149-amino-acid polypeptide reads, in one-letter code: D-aminoacyl-tRNA deacylase (149 aa).

The Gly-cisPro motif, important for rejection of L-amino acids signature appears at 137–138 (GP).

Belongs to the DTD family. In terms of assembly, homodimer.

It is found in the cytoplasm. It catalyses the reaction glycyl-tRNA(Ala) + H2O = tRNA(Ala) + glycine + H(+). The catalysed reaction is a D-aminoacyl-tRNA + H2O = a tRNA + a D-alpha-amino acid + H(+). An aminoacyl-tRNA editing enzyme that deacylates mischarged D-aminoacyl-tRNAs. Also deacylates mischarged glycyl-tRNA(Ala), protecting cells against glycine mischarging by AlaRS. Acts via tRNA-based rather than protein-based catalysis; rejects L-amino acids rather than detecting D-amino acids in the active site. By recycling D-aminoacyl-tRNA to D-amino acids and free tRNA molecules, this enzyme counteracts the toxicity associated with the formation of D-aminoacyl-tRNA entities in vivo and helps enforce protein L-homochirality. The protein is D-aminoacyl-tRNA deacylase of Thioalkalivibrio sulfidiphilus (strain HL-EbGR7).